The following is a 380-amino-acid chain: MSTSNLFNTVPFGKNVLNHKIVLSPMTRFRADDNGVPLSYMKTFYAQRASVRGTLLVTDAVAICPRTKGFPNVPGIWNKDQIAAWKEVVDEVHSKGSFIWLQLWATGRAADLEALTSQGLKLESSSEVPVAPGEPTPRALDEDEIQQYILDYVQGAKNAVHGAGFDGVEIHGANGFLVDQFLQSSCNRRTDQWGGSIENRSRFGLEITRGVVDAVGHDRVGMKLSPWSTFQGMGTMDDLVPQFEHFITCLREMDIAYLHLANSRWVEEEDPSIRTHPDFHNQTFVQMWGKKRPILLAGGYDPDSARRLVDQTYSDRNNVLVVFGRHYISNPDLPFRLRMGIALQKYNRDTFYIPCSGEGYVDYPFCKEYLDQADEAAVAG.

Residues 25–27, Ala60, Gln102, and His171 each bind FMN; that span reads PMT. Residues His171 and Asn174 each coordinate substrate. Residues Lys223, Gly299, 324–325, and Arg325 contribute to the FMN site; that span reads GR. Tyr352 serves as a coordination point for substrate.

The protein belongs to the NADH:flavin oxidoreductase/NADH oxidase family.

Functionally, probable inactive dehydrogenase; part of the gene cluster that mediates the biosynthesis of fungal ergot alkaloid. DmaW catalyzes the first step of ergot alkaloid biosynthesis by condensing dimethylallyl diphosphate (DMAP) and tryptophan to form 4-dimethylallyl-L-tryptophan. The second step is catalyzed by the methyltransferase easF that methylates 4-dimethylallyl-L-tryptophan in the presence of S-adenosyl-L-methionine, resulting in the formation of 4-dimethylallyl-L-abrine. The catalase easC and the FAD-dependent oxidoreductase easE then transform 4-dimethylallyl-L-abrine to chanoclavine-I which is further oxidized by easD in the presence of NAD(+), resulting in the formation of chanoclavine-I aldehyde. Agroclavine dehydrogenase easG then mediates the conversion of chanoclavine-I aldehyde to agroclavine via a non-enzymatic adduct reaction: the substrate is an iminium intermediate that is formed spontaneously from chanoclavine-I aldehyde in the presence of glutathione. The presence of easA is not required to complete this reaction. Further conversion of agroclavine to paspalic acid is a two-step process involving oxidation of agroclavine to elymoclavine and of elymoclavine to paspalic acid, the second step being performed by the elymoclavine oxidase cloA. Paspalic acid is then further converted to D-lysergic acid. Ergopeptines are assembled from D-lysergic acid and three different amino acids by the D-lysergyl-peptide-synthetases composed each of a monomudular and a trimodular nonribosomal peptide synthetase subunit. LpsB and lpsC encode the monomodular subunits responsible for D-lysergic acid activation and incorporation into the ergopeptine backbone. LpsA1 and A2 subunits encode the trimodular nonribosomal peptide synthetase assembling the tripeptide portion of ergopeptines. LpsA1 is responsible for formation of the major ergopeptine, ergotamine, and lpsA2 for alpha-ergocryptine, the minor ergopeptine of the total alkaloid mixture elaborated by C.purpurea. D-lysergyl-tripeptides are assembled by the nonribosomal peptide synthetases and released as N-(D-lysergyl-aminoacyl)-lactams. Cyclolization of the D-lysergyl-tripeptides is performed by the Fe(2+)/2-ketoglutarate-dependent dioxygenase easH which introduces a hydroxyl group into N-(D-lysergyl-aminoacyl)-lactam at alpha-C of the aminoacyl residue followed by spontaneous condensation with the terminal lactam carbonyl group. This chain is Probable inactive dehydrogenase easA, found in Claviceps purpurea (strain 20.1) (Ergot fungus).